Reading from the N-terminus, the 586-residue chain is Nucleus accumbens-associated protein 2 (586 aa).

The region spanning 30 to 94 is the BTB domain; sequence CDVSIVVKGQ…CYTGKLTMAA (65 aa). Residue Lys-171 forms a Glycyl lysine isopeptide (Lys-Gly) (interchain with G-Cter in SUMO2) linkage. The interval 177–196 is disordered; the sequence is MPPASGPGLASKRPLETGPR. Lys-215 is covalently cross-linked (Glycyl lysine isopeptide (Lys-Gly) (interchain with G-Cter in SUMO2)). Residues 236-272 are disordered; it reads QVPYPPGERTSPGASSLPTTDSPTSYHNEEDEEDDEA. Polar residues predominate over residues 247–261; it reads PGASSLPTTDSPTSY. Residues Lys-297, Lys-427, and Lys-454 each participate in a glycyl lysine isopeptide (Lys-Gly) (interchain with G-Cter in SUMO2) cross-link. Residues 349–446 enclose the BEN domain; that stretch reads GSGVYITRGQ…DMCTNARRVR (98 aa). Residues 542–586 are disordered; it reads APEQLPADGQSSPQAFEQGNTSSSRPQTPVATATRRPEGTYAGTL. Positions 550–572 are enriched in polar residues; sequence GQSSPQAFEQGNTSSSRPQTPVA.

Homooligomer; mediated by the BTB domain. Interacts with the NuRD complex. Interacts (via C-terminal part) with HDAC2. Interacts (via BTB domain) with MTA1, MTA2 and MTA3.

It localises to the nucleus. Its function is as follows. Functions as a transcriptional repressor through its association with the NuRD complex. Recruits the NuRD complex to the promoter of MDM2, leading to the repression of MDM2 transcription and subsequent stability of p53/TP53. The chain is Nucleus accumbens-associated protein 2 (Nacc2) from Mus musculus (Mouse).